We begin with the raw amino-acid sequence, 89 residues long: Acylphosphatase (89 aa).

Positions 4-89 (SYIAHISGRV…WQEHHFFSIG (86 aa)) constitute an Acylphosphatase-like domain. Active-site residues include Arg19 and Asn37.

It belongs to the acylphosphatase family.

It carries out the reaction an acyl phosphate + H2O = a carboxylate + phosphate + H(+). The polypeptide is Acylphosphatase (acyP) (Colwellia psychrerythraea (strain 34H / ATCC BAA-681) (Vibrio psychroerythus)).